A 242-amino-acid polypeptide reads, in one-letter code: Small ribosomal subunit protein uS7m (242 aa).

Residues Met1–Tyr37 constitute a mitochondrion transit peptide. Residue Lys228 is modified to N6-acetyllysine.

Belongs to the universal ribosomal protein uS7 family. As to quaternary structure, component of the mitochondrial ribosome small subunit (28S) which comprises a 12S rRNA and about 30 distinct proteins.

Its subcellular location is the mitochondrion. In Bos taurus (Bovine), this protein is Small ribosomal subunit protein uS7m (MRPS7).